We begin with the raw amino-acid sequence, 477 residues long: Ribulose bisphosphate carboxylase large chain (477 aa).

Positions 1-2 (MS) are excised as a propeptide. The residue at position 3 (proline 3) is an N-acetylproline. Lysine 14 is subject to N6,N6,N6-trimethyllysine. Substrate-binding residues include asparagine 123 and threonine 173. Lysine 175 acts as the Proton acceptor in catalysis. Residue lysine 177 participates in substrate binding. The Mg(2+) site is built by lysine 201, aspartate 203, and glutamate 204. Position 201 is an N6-carboxylysine (lysine 201). The Proton acceptor role is filled by histidine 294. Positions 295, 327, and 379 each coordinate substrate.

This sequence belongs to the RuBisCO large chain family. Type I subfamily. Heterohexadecamer of 8 large chains and 8 small chains; disulfide-linked. The disulfide link is formed within the large subunit homodimers. Requires Mg(2+) as cofactor. Post-translationally, the disulfide bond which can form in the large chain dimeric partners within the hexadecamer appears to be associated with oxidative stress and protein turnover.

Its subcellular location is the plastid. It is found in the chloroplast. The enzyme catalyses 2 (2R)-3-phosphoglycerate + 2 H(+) = D-ribulose 1,5-bisphosphate + CO2 + H2O. It carries out the reaction D-ribulose 1,5-bisphosphate + O2 = 2-phosphoglycolate + (2R)-3-phosphoglycerate + 2 H(+). Its function is as follows. RuBisCO catalyzes two reactions: the carboxylation of D-ribulose 1,5-bisphosphate, the primary event in carbon dioxide fixation, as well as the oxidative fragmentation of the pentose substrate in the photorespiration process. Both reactions occur simultaneously and in competition at the same active site. The chain is Ribulose bisphosphate carboxylase large chain from Agrostis stolonifera (Creeping bentgrass).